We begin with the raw amino-acid sequence, 36 residues long: Photosystem I reaction center subunit VIII (36 aa).

A helical membrane pass occupies residues 9 to 29 (IFVPLVGLVFPAIAMASLSLY).

It belongs to the PsaI family.

The protein resides in the plastid. Its subcellular location is the chloroplast thylakoid membrane. Its function is as follows. May help in the organization of the PsaL subunit. This chain is Photosystem I reaction center subunit VIII, found in Phalaenopsis aphrodite subsp. formosana (Moth orchid).